The chain runs to 417 residues: GTP-binding protein YPT11 (417 aa).

The segment at 1–34 is disordered; sequence MSQRKRYSLNVVTSPSIPSPTPSAPIRTNESNWE. Residues 97–104, 228–232, and 292–295 contribute to the GTP site; these read GDANVGKT, DTAGQ, and NKID. S-geranylgeranyl cysteine attachment occurs at residues Cys-415 and Cys-416.

It belongs to the small GTPase superfamily. Rab family. Interacts with MYO2 (via C-terminal tail domain). Interacts with YIF1, YIP3, YIP4 and YIP5.

It is found in the endoplasmic reticulum membrane. The protein resides in the bud tip. It localises to the bud neck. Its function is as follows. Involved in the positive control of both endoplasmic reticulum (ER) and mitochondrion inheritance during cell divison. Required for the MYO2-dependent retention of newly inherited mitochondria at the bud tip in developing daughter cells. This chain is GTP-binding protein YPT11 (YPT11), found in Saccharomyces cerevisiae (strain RM11-1a) (Baker's yeast).